Here is a 23-residue protein sequence, read N- to C-terminus: Cytochrome c oxidase subunit 7A-liver, mitochondrial (23 aa).

Belongs to the cytochrome c oxidase VIIa family. In terms of assembly, component of the cytochrome c oxidase (complex IV, CIV), a multisubunit enzyme composed of 14 subunits. The complex is composed of a catalytic core of 3 subunits MT-CO1, MT-CO2 and MT-CO3, encoded in the mitochondrial DNA, and 11 supernumerary subunits COX4I, COX5A, COX5B, COX6A, COX6B, COX6C, COX7A, COX7B, COX7C, COX8 and NDUFA4, which are encoded in the nuclear genome. The complex exists as a monomer or a dimer and forms supercomplexes (SCs) in the inner mitochondrial membrane with NADH-ubiquinone oxidoreductase (complex I, CI) and ubiquinol-cytochrome c oxidoreductase (cytochrome b-c1 complex, complex III, CIII), resulting in different assemblies (supercomplex SCI(1)III(2)IV(1) and megacomplex MCI(2)III(2)IV(2)).

It is found in the mitochondrion inner membrane. The protein operates within energy metabolism; oxidative phosphorylation. Component of the cytochrome c oxidase, the last enzyme in the mitochondrial electron transport chain which drives oxidative phosphorylation. The respiratory chain contains 3 multisubunit complexes succinate dehydrogenase (complex II, CII), ubiquinol-cytochrome c oxidoreductase (cytochrome b-c1 complex, complex III, CIII) and cytochrome c oxidase (complex IV, CIV), that cooperate to transfer electrons derived from NADH and succinate to molecular oxygen, creating an electrochemical gradient over the inner membrane that drives transmembrane transport and the ATP synthase. Cytochrome c oxidase is the component of the respiratory chain that catalyzes the reduction of oxygen to water. Electrons originating from reduced cytochrome c in the intermembrane space (IMS) are transferred via the dinuclear copper A center (CU(A)) of subunit 2 and heme A of subunit 1 to the active site in subunit 1, a binuclear center (BNC) formed by heme A3 and copper B (CU(B)). The BNC reduces molecular oxygen to 2 water molecules using 4 electrons from cytochrome c in the IMS and 4 protons from the mitochondrial matrix. This Oncorhynchus mykiss (Rainbow trout) protein is Cytochrome c oxidase subunit 7A-liver, mitochondrial.